The chain runs to 314 residues: uncharacterized protein (314 aa).

Disordered stretches follow at residues Arg170–Glu203 and Val258–Arg314. Residues Ser171–Thr186 show a composition bias toward low complexity. A compositionally biased stretch (pro residues) spans Pro187–Asn200. The segment covering Ser261–His272 has biased composition (polar residues). Basic and acidic residues predominate over residues Arg289–Met303.

This is an uncharacterized protein from Arabidopsis thaliana (Mouse-ear cress).